Consider the following 1174-residue polypeptide: Male determiner protein Mdmd(III) (1174 aa).

Positions 1–15 are enriched in basic and acidic residues; that stretch reads MNATDAESRKPENKP. Disordered stretches follow at residues 1-51, 80-109, and 136-259; these read MNAT…SGQR, KDGS…HPVE, and KQLS…LRRS. The segment covering 16–35 has biased composition (low complexity); it reads SSESSSSGSTSGSSDGEVSS. The span at 36–47 shows a compositional bias: polar residues; sequence KTYFKNNKSKVL. Residues 80–92 are compositionally biased toward basic and acidic residues; that stretch reads KDGSNEMLPKEDS. Positions 93–102 are enriched in polar residues; sequence INTNHNYTTD. A compositionally biased stretch (low complexity) spans 138–153; the sequence is LSAYRSRSRSTRLSYS. A compositionally biased stretch (basic residues) spans 167–180; sequence SRYKKSVLRNRRTS. Basic and acidic residues predominate over residues 183-200; that stretch reads HGRDSSTTKRSVSRDKDN. A compositionally biased stretch (basic residues) spans 201–223; that stretch reads RLRRRIGSSRSHTRSHSRFRRSE. The span at 235–259 shows a compositional bias: basic and acidic residues; the sequence is RSQERRHERRRSMSSDYERIALRRS. Residues 348–531 form the MIF4G domain; sequence KKYIHGYINK…KVLFQVRRDG (184 aa). Residues 641–757 form the MI domain; the sequence is ALRRTIYLTL…SWDVLDCIKL (117 aa). Low complexity predominate over residues 840 to 857; the sequence is SAPSSSSSSSLSSELSAP. Disordered stretches follow at residues 840-1045 and 1096-1133; these read SAPS…SRTK and KDNY…NHSR. The span at 869–909 shows a compositional bias: basic residues; that stretch reads KKKHKGKNKKMTKKKNPSKKKEKTKKFVGKNKIAAKNKTIK. The span at 910-924 shows a compositional bias: basic and acidic residues; that stretch reads RRTDKDNSSSKDNFL. Over residues 926–957 the composition is skewed to low complexity; that stretch reads SESSSNESISLDSLSSELFAPSSYSSSESSND. The segment covering 963–1001 has biased composition (basic residues); it reads KHKGKNKKMTKKKNPSNKKEKTKKKLSKNKKAPNKNTKK. Positions 1010–1020 are enriched in low complexity; that stretch reads SSESSISESKS. Over residues 1034–1045 the composition is skewed to basic residues; it reads RKKRVTSKSRTK. Positions 1103-1118 are enriched in basic and acidic residues; the sequence is QNHEISQRHDSEIKRR. Residues 1119 to 1130 show a composition bias toward basic residues; the sequence is REERKKRHHEKN.

The protein belongs to the CWC22 family. As to quaternary structure, component of the spliceosome C complex.

It localises to the nucleus speckle. Its function is as follows. Male determiner protein (M-factor) that controls male somatic sexual differentiation. Acts as a dominant factor that regulates the mRNA splicing of transformer (tra) and doublesex (dsx) transcripts and promotes expression of male splice forms of tra and dsx. Probably acts as a component of the spliceosome C complex required for mRNA splicing factor and exon-junction complex (EJC) assembly. Hinders eIF4AIII from non-specifically binding RNA and escorts it to the splicing machinery to promote EJC assembly on mature mRNAs. This Musca domestica (House fly) protein is Male determiner protein Mdmd(III).